A 287-amino-acid chain; its full sequence is Rhodopsin (287 aa).

Over 1–5 (VNGAA) the chain is Extracellular. A helical membrane pass occupies residues 6-30 (YAGLCAYMFLLILVGFPVNFLTLYV). Residues 31 to 42 (TLEHKKLRTPLN) are Cytoplasmic-facing. Residues 43–65 (YILLNLAVADLFMVLGGFTTTMY) form a helical membrane-spanning segment. Residues 66-79 (TSAHGYFVLGRLGC) are Extracellular-facing. A disulfide bridge connects residues cysteine 79 and cysteine 156. Residues 80-102 (NVEGFFATLGGEIALWSLVVLAV) traverse the membrane as a helical segment. Residues 103–105 (ERW) carry the 'Ionic lock' involved in activated form stabilization motif. Topologically, residues 103 to 121 (ERWIVVCKPISNFRFTEEH) are cytoplasmic. A helical membrane pass occupies residues 122-142 (AIMGLGFNWVMASACAVPPLV). Topologically, residues 143 to 171 (GWSRYIPEGMQCSCGINYYTRSEGFNNES) are extracellular. Asparagine 169 is a glycosylation site (N-linked (GlcNAc...) asparagine). The chain crosses the membrane as a helical span at residues 172–193 (LVMKMLICHFLIPLFVIFFCYG). The Cytoplasmic portion of the chain corresponds to 194 to 221 (RMLCAVKEAAAAQQESETTQRAEREVSR). A helical membrane pass occupies residues 222–243 (MVVIMVISFLVCWLPYASVAWY). Topologically, residues 244-255 (IFCNQGSEFGPV) are extracellular. A helical membrane pass occupies residues 256 to 277 (FMTLPAFFAKSASIYNPLIYIC). Lysine 265 is subject to N6-(retinylidene)lysine. Topologically, residues 278-287 (MNKHSRHCMI) are cytoplasmic.

The protein belongs to the G-protein coupled receptor 1 family. Opsin subfamily. In terms of processing, phosphorylated on some or all of the serine and threonine residues present in the C-terminal region. Post-translationally, contains one covalently linked retinal chromophore.

It localises to the membrane. It is found in the cell projection. Its subcellular location is the cilium. The protein localises to the photoreceptor outer segment. Functionally, photoreceptor required for image-forming vision at low light intensity. While most salt water fish species use retinal as chromophore, most freshwater fish use 3-dehydroretinal, or a mixture of retinal and 3-dehydroretinal. Light-induced isomerization of 11-cis to all-trans retinal triggers a conformational change that activates signaling via G-proteins. Subsequent receptor phosphorylation mediates displacement of the bound G-protein alpha subunit by arrestin and terminates signaling. This is Rhodopsin (rho) from Taurulus bubalis (Long-spined sea scorpion).